A 728-amino-acid polypeptide reads, in one-letter code: MAMRDLVNGGAACAVPGSSSSSNPLGALTNALLGSSSKTQERLKEIPNANRSGPRPQFYSEDQQIRSLPGSELDQPLLQPGAQGSEFFRGFRSVDQNGLGAAWDEVQQGGPMPPMGPMFEPVQPTFEGPPQRVLSNFLHSFVESSRGGIPFRPAPVPVLGLSQSDKQCIRDRSSIMARHFFADRGEEFINSQVNALLSSLDIDDGIQARGHVPGRFRELDDYWNESQAVVKPNLHPADNWAAEFNQHGMDHGGPDSWVQSFEQQHGVNGWATEFEQGQSQLMSSQMRSMDMQNIAAMEQTRKLAHTLSQDGNPKFQNSRFLQFVSKMSRGELIIDENQVKQASAPGEWATEYEQQYLGPPSWADQFANEKLSHGPEQWADEFASGRGQQETAEDQWVNEFSKLNVDDWIDEFAEGPVGDSSADAWANAYDEFLNEKNAGKQTSGVYVFSDMNPYVGHPEPMKEGQELFRKGLLSEAALALEAEVMKNPENAEGWRLLGVTHAENDDDQQAIAAMMRAQEADPTNLEVLLALGVSHTNELEQATALKYLYGWLRNHPKYGAIAPPELADSLYHADIARLFNEASQLNPEDADVHIVLGVLYNLSREFDRAITSFQTALQLKPNDYSLWNKLGATQANSVQSADAISAYQQALDLKPNYVRAWANMGISYANQGMYKESIPYYVRALAMNPKADNAWQYLRLSLSCASRQDMIEACESRNLDLLQKEFPL.

The disordered stretch occupies residues 1–58 (MAMRDLVNGGAACAVPGSSSSSNPLGALTNALLGSSSKTQERLKEIPNANRSGPRPQF). Positions 11–97 (AACAVPGSSS…FRGFRSVDQN (87 aa)) are amphipathic helix 1 (AH1). Cys13 is covalently cross-linked (Glycyl cysteine thioester (Cys-Gly) (interchain with G-Cter in ubiquitin)). 3 tandem repeats follow at residues 240-244 (WAAEF), 257-261 (WVQSF), and 270-274 (WATEF). 3 short sequence motifs (wxxxF/Y motif) span residues 240–244 (WAAEF), 257–261 (WVQSF), and 270–274 (WATEF). Positions 288–311 (SMDMQNIAAMEQTRKLAHTLSQDG) are amphipathic helix 3 (AH3). 6 consecutive repeat copies span residues 348–352 (WATEY), 362–366 (WADQF), 378–382 (WADEF), 396–400 (WVNEF), 408–412 (WIDEF), and 425–429 (WANAY). 6 consecutive short sequence motifs (wxxxF/Y motif) follow at residues 348–352 (WATEY), 362–366 (WADQF), 378–382 (WADEF), 396–400 (WVNEF), 408–412 (WIDEF), and 425–429 (WANAY). Positions 392 to 417 (AEDQWVNEFSKLNVDDWIDEFAEGPV) are amphipathic helix 4 (AH4). TPR repeat units follow at residues 491–524 (AEGW…DPTN), 590–623 (ADVH…KPND), 625–657 (SLWN…KPNY), and 658–691 (VRAW…NPKA).

Belongs to the peroxisomal targeting signal receptor family. Interacts (via WxxxF/Y and LVxEF motifs) with PEX14; promoting translocation through the PEX13-PEX14 docking complex. Interacts with PEX7, promoting peroxisomal import of proteins containing a C-terminal PTS2-type peroxisomal targeting signal. Interacts with LACS7. Post-translationally, monoubiquitinated at Cys-13 by PEX2 during PEX5 passage through the retrotranslocation channel. Cys-13 monoubiquitination acts as a recognition signal for the PEX1-PEX6 complex and is required for PEX5 extraction and export from peroxisomes. When PEX5 recycling is compromised, polyubiquitinated by PEX10 during its passage through the retrotranslocation channel, leading to its degradation. Expressed in flowers, siliques, leaves and roots.

Its subcellular location is the cytoplasm. It is found in the cytosol. The protein localises to the peroxisome matrix. Functionally, receptor that mediates peroxisomal import of proteins containing a C-terminal PTS1-type tripeptide peroxisomal targeting signal (SKL-type). Binds to cargo proteins containing a PTS1 peroxisomal targeting signal in the cytosol, and translocates them into the peroxisome matrix by passing through the PEX13-PEX14 docking complex along with cargo proteins. PEX5 receptor is then retrotranslocated into the cytosol, leading to release of bound cargo in the peroxisome matrix, and reset for a subsequent peroxisome import cycle. In addition to promoting peroxisomal translocation of proteins containing a PTS1 peroxisomal targeting signal, mediates peroxisomal import of proteins containing a C-terminal PTS2-type peroxisomal targeting signal via its interaction with PEX7. Interaction with PEX7 only takes place when PEX7 is associated with cargo proteins containing a PTS2 peroxisomal targeting signal. PEX7 along with PTS2-containing cargo proteins are then translocated through the PEX13-PEX14 docking complex together with PEX5. Necessary for the developmental elimination of obsolete peroxisome matrix proteins. The sequence is that of Peroxisome biogenesis protein 5 (PEX5) from Arabidopsis thaliana (Mouse-ear cress).